The primary structure comprises 628 residues: MNENRTFATPDAVPVRAVVLAAGLGSRLGEPSSRRPKPLTPVAGRPILAHTLGHLAGVGVQEVVLVVGHLREAVRELAGGEYAGMKIHYVVNPDPSTTNNLRSVRLAREFLDQDVFLLEGDVVFEPAVLERLAAAPEASAVAASRPLRPLAGTVVRADADGVLTDYVDDRRQAGAFDHPGALKTANLYLLREAFLRERFLPALEELDRRLAGQGYYDYAVSDGLAAGGHAWRVADISDLAWYEVDDPGDQRQADFRFSPPREQQRILESLHGGYWRYGVTDHALLYNVHFPPAEMMEILRSDFDAVLRNYPSAHAPLTELAATIAARRPEEVVLANGSSEIIKILARLRGNWTVPVPGFNEYENVVGAERVHRYQLDAPDFRLPVEDYAAFVRRSGVDTAVVVSPNNPTSVGVPLADLRRLADLVGPDVLLVIDESFVDFAPAPIASIGPFLDRHRNVLLLKSISKVYGVGGIRLGYAATADTELARTLRAELPIWDINGFAEEFLRVLPHFRRAFADSCRQMRQNTLALAEGLAALPGIRVVPPDANFVFVELTGGIRAPELAHELFRRFRILTKECSGKSMPGGDAYLRVSSRSRAENEVVVAAVAEIVGGPRGAATTEGAGRADG.

The tract at residues 1–255 (MNENRTFATP…DPGDQRQADF (255 aa)) is mobA-like NTP transferase. The interval 278–628 (GVTDHALLYN…TTEGAGRADG (351 aa)) is decarboxylase. At lysine 466 the chain carries N6-(pyridoxal phosphate)lysine.

The protein in the N-terminal section; belongs to the MobA family. This sequence in the C-terminal section; belongs to the class-I pyridoxal-phosphate-dependent aminotransferase family. Mg(2+) is required as a cofactor. It depends on pyridoxal 5'-phosphate as a cofactor.

It catalyses the reaction 2-amino-4-phosphonobutanoate + CTP = CMP-5'-(3-amino-3-carboxypropyl)phosphonate + diphosphate. The enzyme catalyses CMP-5'-(3-amino-3-carboxypropyl)phosphonate + H(+) = CMP-5'-(3-aminopropyl)phosphonate + CO2. It participates in antibiotic biosynthesis. Its function is as follows. Bifunctional cytidylyltransferase/decarboxylase involved in the biosynthesis of the phosphonate antibiotic FR-900098, a potent antimalarial agent that acts as an inhibitor of 1-deoxy-D-xylulose 5-phosphate reductoisomerase (DXR), the first enzyme in the nonmevalonate pathway for isoprenoid biosynthesis. Catalyzes the condensation of 2-amino-4-phosphonobutyrate (2APn) and CTP to form CMP-5'-2APn and then decarboxylates CMP-5'-2APn to yield CMP-5'-(3-aminopropyl)phosphonate (CMP-5'-3APn). This is CMP-5'-(3-aminopropyl)phosphonate synthase from Streptomyces rubellomurinus (strain ATCC 31215).